The sequence spans 126 residues: Fluoride-specific ion channel FluC (126 aa).

Helical transmembrane passes span 6–26, 32–52, 68–90, and 102–122; these read VLLVGAGGFAGSVARYLVALA, TGFPFATFAVNLLGSFLIGFI, LLLTTGFCGGFTTFSTAMYETGG, and LYVAGSLAGGLACLFSGTLLA. Residues glycine 76 and threonine 79 each contribute to the Na(+) site.

It belongs to the fluoride channel Fluc/FEX (TC 1.A.43) family.

The protein localises to the cell inner membrane. It carries out the reaction fluoride(in) = fluoride(out). Na(+) is not transported, but it plays an essential structural role and its presence is essential for fluoride channel function. Its function is as follows. Fluoride-specific ion channel. Important for reducing fluoride concentration in the cell, thus reducing its toxicity. The polypeptide is Fluoride-specific ion channel FluC (Chlorobaculum tepidum (strain ATCC 49652 / DSM 12025 / NBRC 103806 / TLS) (Chlorobium tepidum)).